A 101-amino-acid chain; its full sequence is Large ribosomal subunit protein bL21 (101 aa).

Belongs to the bacterial ribosomal protein bL21 family. In terms of assembly, part of the 50S ribosomal subunit. Contacts protein L20.

Functionally, this protein binds to 23S rRNA in the presence of protein L20. The polypeptide is Large ribosomal subunit protein bL21 (Beutenbergia cavernae (strain ATCC BAA-8 / DSM 12333 / CCUG 43141 / JCM 11478 / NBRC 16432 / NCIMB 13614 / HKI 0122)).